A 485-amino-acid polypeptide reads, in one-letter code: E-selectin (485 aa).

Positions 1–22 are cleaved as a signal peptide; that stretch reads MIVSQYLSALTFVLLLFKESRT. One can recognise a C-type lectin domain in the interval 23–140; sequence WSYHASTEMM…CTKQKLALCY (118 aa). Topologically, residues 23-430 are extracellular; it reads WSYHASTEMM…CEAPTVSQTP (408 aa). 15 disulfide bridges follow: C41-C139, C112-C131, C144-C155, C149-C164, C166-C175, C181-C224, C194-C206, C210-C237, C242-C286, C255-C268, C272-C299, C304-C349, C335-C362, C367-C408, and C394-C421. N-linked (GlcNAc...) asparagine glycans are attached at residues N61, N79, and N88. The Ca(2+) site is built by E102, N104, and E110. Residues 102–110, 114–119, and 127–129 contribute to the a carbohydrate site; these read EPNNKQSDE, EIYIKR, and NDE. Positions 127 and 128 each coordinate Ca(2+). The region spanning 141–176 is the EGF-like domain; sequence KAACNPTPCGSHGECVETINNYTCQCHPGFKGLKCE. The N-linked (GlcNAc...) asparagine glycan is linked to N161. Sushi domains follow at residues 179 to 239, 240 to 301, 302 to 364, and 365 to 423; these read VTCP…KCNV, VKCD…TCKA, VSCA…VCEV, and VRCS…TCEA. A glycan (N-linked (GlcNAc...) asparagine) is linked at N203. The N-linked (GlcNAc...) asparagine glycan is linked to N265. N-linked (GlcNAc...) asparagine glycans are attached at residues N312 and N316. N379 and N401 each carry an N-linked (GlcNAc...) asparagine glycan. Residues 431-453 traverse the membrane as a helical segment; that stretch reads LAVGLSTAGVSLVTIPSFLFWLL. The Cytoplasmic segment spans residues 454–485; it reads KRLQKKAKKFSPASSCSSLKSNGCYSTPSKLI. The segment at 466–485 is disordered; the sequence is ASSCSSLKSNGCYSTPSKLI.

It belongs to the selectin/LECAM family. Interacts with SELPLG/PSGL1 and PODXL2 through the sialyl Lewis X epitope. SELPLG sulfation appears not to be required for this interaction.

The protein resides in the cell membrane. In terms of biological role, cell-surface glycoprotein having a role in immunoadhesion. Mediates in the adhesion of blood neutrophils in cytokine-activated endothelium through interaction with SELPLG/PSGL1. May have a role in capillary morphogenesis. This Bos taurus (Bovine) protein is E-selectin (SELE).